A 585-amino-acid polypeptide reads, in one-letter code: Arginine--tRNA ligase (585 aa).

The 'HIGH' region signature appears at A131–H141.

It belongs to the class-I aminoacyl-tRNA synthetase family. Monomer.

The protein resides in the cytoplasm. The enzyme catalyses tRNA(Arg) + L-arginine + ATP = L-arginyl-tRNA(Arg) + AMP + diphosphate. The polypeptide is Arginine--tRNA ligase (Bartonella henselae (strain ATCC 49882 / DSM 28221 / CCUG 30454 / Houston 1) (Rochalimaea henselae)).